We begin with the raw amino-acid sequence, 294 residues long: Shikimate kinase (294 aa).

Position 87 to 97 (87 to 97) interacts with ATP; the sequence is PLAGGLKSSSA.

It belongs to the GHMP kinase family. Archaeal shikimate kinase subfamily.

The protein resides in the cytoplasm. The enzyme catalyses shikimate + ATP = 3-phosphoshikimate + ADP + H(+). The protein operates within metabolic intermediate biosynthesis; chorismate biosynthesis; chorismate from D-erythrose 4-phosphate and phosphoenolpyruvate: step 5/7. The protein is Shikimate kinase (aroK) of Methanosarcina acetivorans (strain ATCC 35395 / DSM 2834 / JCM 12185 / C2A).